We begin with the raw amino-acid sequence, 64 residues long: Large ribosomal subunit protein bL33c (64 aa).

This sequence belongs to the bacterial ribosomal protein bL33 family.

Its subcellular location is the plastid. It localises to the chloroplast. This Phaeodactylum tricornutum (strain CCAP 1055/1) protein is Large ribosomal subunit protein bL33c.